A 730-amino-acid chain; its full sequence is Elongation factor 2 (730 aa).

The tr-type G domain maps to 18 to 238 (DQIRNFGVIA…YSEGKVDELV (221 aa)). GTP contacts are provided by residues 27–34 (AHVDHGKT), 93–97 (DTPGH), and 147–150 (NKVD). His-595 carries the diphthamide modification. Residues 711 to 730 (RKRKGLAPDPPTVSEFIDRE) form a disordered region.

This sequence belongs to the TRAFAC class translation factor GTPase superfamily. Classic translation factor GTPase family. EF-G/EF-2 subfamily.

Its subcellular location is the cytoplasm. In terms of biological role, catalyzes the GTP-dependent ribosomal translocation step during translation elongation. During this step, the ribosome changes from the pre-translocational (PRE) to the post-translocational (POST) state as the newly formed A-site-bound peptidyl-tRNA and P-site-bound deacylated tRNA move to the P and E sites, respectively. Catalyzes the coordinated movement of the two tRNA molecules, the mRNA and conformational changes in the ribosome. This is Elongation factor 2 from Cenarchaeum symbiosum (strain A).